A 218-amino-acid chain; its full sequence is Ropporin-1-like protein (218 aa).

The RIIa domain occupies 17–54; the sequence is PALPNMLKQFTKAAIRTQPRDVLQWAADYFSALSKGQD. The tract at residues 199–218 is disordered; that stretch reads QSQGGMVQPSNFTSLHTAEK.

It belongs to the ropporin family. In terms of assembly, component of axonemal radial spoke complexes.

The protein resides in the cell projection. It localises to the cilium. It is found in the flagellum. Its function is as follows. Functions as part of axonemal radial spoke complexes that play an important part in the motility of sperm and cilia. Important for male fertility. Involved in fibrous sheath integrity and sperm motility, plays a role in PKA-dependent signaling processes required for spermatozoa capacitation. The chain is Ropporin-1-like protein (ropn1l) from Danio rerio (Zebrafish).